The primary structure comprises 923 residues: Leucine--tRNA ligase (923 aa).

A 'HIGH' region motif is present at residues 41–52; it reads PYPSGEGLHVGH. The 'KMSKS' region signature appears at 698–702; that stretch reads KMSKS. Lysine 701 contacts ATP.

The protein belongs to the class-I aminoacyl-tRNA synthetase family.

The protein resides in the cytoplasm. It catalyses the reaction tRNA(Leu) + L-leucine + ATP = L-leucyl-tRNA(Leu) + AMP + diphosphate. This chain is Leucine--tRNA ligase, found in Amoebophilus asiaticus (strain 5a2).